Reading from the N-terminus, the 100-residue chain is Small ribosomal subunit protein uS14c (100 aa).

The protein belongs to the universal ribosomal protein uS14 family. As to quaternary structure, part of the 30S ribosomal subunit.

Its subcellular location is the plastid. It localises to the chloroplast. Its function is as follows. Binds 16S rRNA, required for the assembly of 30S particles. The polypeptide is Small ribosomal subunit protein uS14c (Phalaenopsis aphrodite subsp. formosana (Moth orchid)).